Reading from the N-terminus, the 210-residue chain is Thiamine-phosphate synthase (210 aa).

Residues Q39–K43 and N71 each bind 4-amino-2-methyl-5-(diphosphooxymethyl)pyrimidine. Mg(2+)-binding residues include D72 and D91. S110 serves as a coordination point for 4-amino-2-methyl-5-(diphosphooxymethyl)pyrimidine. T134–T136 contacts 2-[(2R,5Z)-2-carboxy-4-methylthiazol-5(2H)-ylidene]ethyl phosphate. K137 contributes to the 4-amino-2-methyl-5-(diphosphooxymethyl)pyrimidine binding site. A 2-[(2R,5Z)-2-carboxy-4-methylthiazol-5(2H)-ylidene]ethyl phosphate-binding site is contributed by G163.

This sequence belongs to the thiamine-phosphate synthase family. The cofactor is Mg(2+).

The catalysed reaction is 2-[(2R,5Z)-2-carboxy-4-methylthiazol-5(2H)-ylidene]ethyl phosphate + 4-amino-2-methyl-5-(diphosphooxymethyl)pyrimidine + 2 H(+) = thiamine phosphate + CO2 + diphosphate. It catalyses the reaction 2-(2-carboxy-4-methylthiazol-5-yl)ethyl phosphate + 4-amino-2-methyl-5-(diphosphooxymethyl)pyrimidine + 2 H(+) = thiamine phosphate + CO2 + diphosphate. The enzyme catalyses 4-methyl-5-(2-phosphooxyethyl)-thiazole + 4-amino-2-methyl-5-(diphosphooxymethyl)pyrimidine + H(+) = thiamine phosphate + diphosphate. Its pathway is cofactor biosynthesis; thiamine diphosphate biosynthesis; thiamine phosphate from 4-amino-2-methyl-5-diphosphomethylpyrimidine and 4-methyl-5-(2-phosphoethyl)-thiazole: step 1/1. Condenses 4-methyl-5-(beta-hydroxyethyl)thiazole monophosphate (THZ-P) and 2-methyl-4-amino-5-hydroxymethyl pyrimidine pyrophosphate (HMP-PP) to form thiamine monophosphate (TMP). The sequence is that of Thiamine-phosphate synthase from Campylobacter jejuni subsp. jejuni serotype O:2 (strain ATCC 700819 / NCTC 11168).